Consider the following 317-residue polypeptide: Annexin D2 (317 aa).

Ala2 is subject to N-acetylalanine. Annexin repeat units lie at residues 11–82, 83–154, 166–238, and 242–313; these read PLPE…LWTL, DPPE…PLVS, MLAR…AVIT, and YPEK…ALLG. Ca(2+) is bound by residues Phe24, Gly26, Gly28, and Glu68. Residue Ser95 is modified to Phosphoserine. Thr100 and Thr112 each carry phosphothreonine. The residue at position 129 (Tyr129) is a Phosphotyrosine. Ca(2+)-binding residues include Ile255 and Gly259. Tyr284 is modified (phosphotyrosine). Residue Ser289 is modified to Phosphoserine. Residues Asp299, Thr300, and Glu305 each contribute to the Ca(2+) site.

This sequence belongs to the annexin (TC 1.A.31.1) family. As to expression, expressed mainly in roots and flowers. Low in stems and bearly detectable in leaves.

The protein localises to the cytoplasm. Its subcellular location is the cytosol. It localises to the membrane. Functionally, may mediate regulated, targeted secretion of Golgi-derived vesicles during seedling development. The protein is Annexin D2 (ANN2) of Arabidopsis thaliana (Mouse-ear cress).